The following is a 179-amino-acid chain: Peptide deformylase (179 aa).

Fe cation-binding residues include Cys103 and His145. Glu146 is an active-site residue. Residue His149 coordinates Fe cation.

It belongs to the polypeptide deformylase family. Fe(2+) serves as cofactor.

It catalyses the reaction N-terminal N-formyl-L-methionyl-[peptide] + H2O = N-terminal L-methionyl-[peptide] + formate. In terms of biological role, removes the formyl group from the N-terminal Met of newly synthesized proteins. Requires at least a dipeptide for an efficient rate of reaction. N-terminal L-methionine is a prerequisite for activity but the enzyme has broad specificity at other positions. This Leptospira biflexa serovar Patoc (strain Patoc 1 / Ames) protein is Peptide deformylase.